The following is a 183-amino-acid chain: Endoribonuclease YbeY (183 aa).

Zn(2+) is bound by residues His142, His146, and His152.

This sequence belongs to the endoribonuclease YbeY family. Zn(2+) is required as a cofactor.

Its subcellular location is the cytoplasm. Functionally, single strand-specific metallo-endoribonuclease involved in late-stage 70S ribosome quality control and in maturation of the 3' terminus of the 16S rRNA. The polypeptide is Endoribonuclease YbeY (Trichodesmium erythraeum (strain IMS101)).